The sequence spans 393 residues: Phosphopentomutase (393 aa).

The Mn(2+) site is built by aspartate 15, aspartate 288, histidine 293, aspartate 329, histidine 330, and histidine 341.

It belongs to the phosphopentomutase family. Mn(2+) is required as a cofactor.

The protein localises to the cytoplasm. The enzyme catalyses 2-deoxy-alpha-D-ribose 1-phosphate = 2-deoxy-D-ribose 5-phosphate. The catalysed reaction is alpha-D-ribose 1-phosphate = D-ribose 5-phosphate. Its pathway is carbohydrate degradation; 2-deoxy-D-ribose 1-phosphate degradation; D-glyceraldehyde 3-phosphate and acetaldehyde from 2-deoxy-alpha-D-ribose 1-phosphate: step 1/2. Its function is as follows. Isomerase that catalyzes the conversion of deoxy-ribose 1-phosphate (dRib-1-P) and ribose 1-phosphate (Rib-1-P) to deoxy-ribose 5-phosphate (dRib-5-P) and ribose 5-phosphate (Rib-5-P), respectively. The sequence is that of Phosphopentomutase from Halalkalibacterium halodurans (strain ATCC BAA-125 / DSM 18197 / FERM 7344 / JCM 9153 / C-125) (Bacillus halodurans).